Here is a 509-residue protein sequence, read N- to C-terminus: Erythropoietin receptor (509 aa).

The signal sequence occupies residues 1-24; it reads MYHFGATLWPGVGSLCLLLAGATW. Over 25-251 the chain is Extracellular; the sequence is APSPNSPDAK…SLLTASDLDP (227 aa). Disulfide bonds link cysteine 52–cysteine 62 and cysteine 91–cysteine 107. Residues 148–248 enclose the Fibronectin type-III domain; that stretch reads PPAGLLARRA…EPASLLTASD (101 aa). The N-linked (GlcNAc...) asparagine glycan is linked to asparagine 184. The short motif at 234 to 238 is the WSXWS motif element; the sequence is WSAWS. The helical transmembrane segment at 252-274 threads the bilayer; it reads LILTLSLILVLILLLLAVLALLS. Residues 275–509 lie on the Cytoplasmic side of the membrane; sequence HRRTLKQKIW…PSPPNYVTCS (235 aa). Lysine 282 is covalently cross-linked (Glycyl lysine isopeptide (Lys-Gly) (interchain with G-Cter in ubiquitin)). Residues 283 to 291 carry the Box 1 motif motif; that stretch reads IWPGIPSPE. Phosphotyrosine; by JAK2 occurs at positions 369 and 427. The short motif at 453 to 458 is the ITIM motif element; it reads LKYLYL. Lysine 454 is covalently cross-linked (Glycyl lysine isopeptide (Lys-Gly) (interchain with G-Cter in ubiquitin)). Residues tyrosine 455, tyrosine 457, tyrosine 469, tyrosine 486, tyrosine 490, and tyrosine 505 each carry the phosphotyrosine; by JAK2 modification. Positions 467–509 are disordered; the sequence is TDYSSGGSQETQGGSSSGPYSNPYENSLVPAPEPSPPNYVTCS. A compositionally biased stretch (low complexity) spans 470–493; the sequence is SSGGSQETQGGSSSGPYSNPYENS.

This sequence belongs to the type I cytokine receptor family. Type 1 subfamily. As to quaternary structure, forms homodimers on EPO stimulation. The tyrosine-phosphorylated form interacts with several SH2 domain-containing proteins including LYN, the adapter protein SH2B2, PTPN6, PTPN11, JAK2, PI3 kinases, STAT5A/B, SOCS3, CRKL. Interacts with INPP5D/SHIP1. SH2B2 binding inhibits the JAK-STAT signaling. Interacts with RHEX; this interaction occurs in a erythropoietin (EPO)-dependent manner. Interacts with ATXN2L. On EPO stimulation, phosphorylated on C-terminal tyrosine residues by JAK2. The phosphotyrosine motifs are also recruitment sites for several SH2-containing proteins and adapter proteins which mediate cell proliferation. Phosphorylation on Tyr-455 is required for PTPN6 interaction, Tyr-427 for PTPN11. Tyr-427 is also required for SOCS3 binding, but Tyr-455/Tyr-457 motif is the preferred binding site. Post-translationally, ubiquitinated by the ECS(SOCS2) complex following ligand-binding and phosphorylation by JAK2, leading to its degradation by the proteasome. Regulation by the ECS(SOCS2) complex acts as a negative feedback loop of erythropoietin-mediated signaling pathway. Ubiquitination at Lys-282 mediates receptor internalization, whereas ubiquitination at Lys-454 promotes trafficking of activated receptors to the lysosomes for degradation. Ubiquitinated by NOSIP; appears to be either multi-monoubiquitinated or polyubiquitinated. Ubiquitination mediates proliferation and survival of EPO-dependent cells.

The protein localises to the cell membrane. In terms of biological role, receptor for erythropoietin, which mediates erythropoietin-induced erythroblast proliferation and differentiation. Upon EPO stimulation, EPOR dimerizes triggering the JAK2/STAT5 signaling cascade. In some cell types, can also activate STAT1 and STAT3. May also activate the LYN tyrosine kinase. Functionally, isoform EPOR-T acts as a dominant-negative receptor of EPOR-mediated signaling. In Sus scrofa (Pig), this protein is Erythropoietin receptor (EPOR).